The chain runs to 434 residues: MSFNTLINWNSCSPEQQRALLTRPAISASDSITRTVSDILDNVKTRGDDALREYSAKFDKTEVTALRVTPEEIAAAGARLSDELKQAMAAAVKNIETFHSAQTLPPVDVETQPGVRCQQVTRPVASVGLYIPGGSAPLFSTVLMLATPARIAGCQNVVLCSPPPIADEILYAAQLCGVQEIFNVGGAQAIAALAFGSESVPKVDKIFGPGNAFVTEAKRQVSQRLDGAAIDMPAGPSEVLVIADSGATPDFVASDLLSQAEHGPDSQVILLTPDADIARKVAEAVERQLAELPRADTARQALSASRLIVTKDLAQCVAISNQYGPEHLIIQTRNARDLVDAITSAGSVFLGDWSPESAGDYASGTNHVLPTYGYTATCSSLGLADFQKRMTVQELSKAGFSALASTIETLAAAERLTAHKNAVTLRVNALKEQA.

NAD(+) is bound by residues Y130, Q188, and N211. Substrate is bound by residues S237, Q259, and H262. Q259 and H262 together coordinate Zn(2+). Residues E326 and H327 each act as proton acceptor in the active site. H327, D360, E414, and H419 together coordinate substrate. D360 serves as a coordination point for Zn(2+). A Zn(2+)-binding site is contributed by H419.

Belongs to the histidinol dehydrogenase family. In terms of assembly, homodimer. Zn(2+) is required as a cofactor.

It catalyses the reaction L-histidinol + 2 NAD(+) + H2O = L-histidine + 2 NADH + 3 H(+). Its pathway is amino-acid biosynthesis; L-histidine biosynthesis; L-histidine from 5-phospho-alpha-D-ribose 1-diphosphate: step 9/9. Its function is as follows. Catalyzes the sequential NAD-dependent oxidations of L-histidinol to L-histidinaldehyde and then to L-histidine. The chain is Histidinol dehydrogenase from Salmonella choleraesuis (strain SC-B67).